The primary structure comprises 215 residues: MNNEQPKIPQATAKRLPLYYRFLKNLHASGKQRVSSAELSEAVKVDPATIRRDFSYFGALGKKGYGYNVNYLLSFFRKTLDQDEITEVALFGVGNLGTAFLNYNFTKNNNTKIVMAFDVDQKKVGKEVGGVPVYHLDELENRLHEGIPVAILTVPAPAAQWITDRLVQKGIKGILNFTPARLNVPKHIRVHHIDLAVELQSLVYFLTVDEHFSLQ.

Positions 18–57 form a DNA-binding region, H-T-H motif; that stretch reads LYYRFLKNLHASGKQRVSSAELSEAVKVDPATIRRDFSYF. An NAD(+)-binding site is contributed by 92-97; sequence GVGNLG.

Belongs to the transcriptional regulatory Rex family. In terms of assembly, homodimer.

The protein localises to the cytoplasm. Modulates transcription in response to changes in cellular NADH/NAD(+) redox state. The sequence is that of Redox-sensing transcriptional repressor Rex from Geobacillus sp. (strain WCH70).